The sequence spans 584 residues: Aspartate--tRNA(Asp/Asn) ligase (584 aa).

Glu-177 contributes to the L-aspartate binding site. The aspartate stretch occupies residues 201–204 (QLFK). Residue Arg-223 coordinates L-aspartate. ATP-binding positions include 223-225 (RDE) and Gln-232. His-447 provides a ligand contact to L-aspartate. Glu-481 lines the ATP pocket. Residue Arg-488 coordinates L-aspartate. 533–536 (GLDR) contacts ATP.

It belongs to the class-II aminoacyl-tRNA synthetase family. Type 1 subfamily. Homodimer.

It localises to the cytoplasm. It carries out the reaction tRNA(Asx) + L-aspartate + ATP = L-aspartyl-tRNA(Asx) + AMP + diphosphate. In terms of biological role, aspartyl-tRNA synthetase with relaxed tRNA specificity since it is able to aspartylate not only its cognate tRNA(Asp) but also tRNA(Asn). Reaction proceeds in two steps: L-aspartate is first activated by ATP to form Asp-AMP and then transferred to the acceptor end of tRNA(Asp/Asn). The protein is Aspartate--tRNA(Asp/Asn) ligase of Chlamydia abortus (strain DSM 27085 / S26/3) (Chlamydophila abortus).